A 400-amino-acid chain; its full sequence is tRNA(Met) cytidine acetate ligase (400 aa).

ATP-binding positions include 7–20 (ITEY…HIYH), Gly-102, Asn-165, and Arg-190.

This sequence belongs to the TmcAL family.

The protein resides in the cytoplasm. It carries out the reaction cytidine(34) in elongator tRNA(Met) + acetate + ATP = N(4)-acetylcytidine(34) in elongator tRNA(Met) + AMP + diphosphate. Its function is as follows. Catalyzes the formation of N(4)-acetylcytidine (ac(4)C) at the wobble position of elongator tRNA(Met), using acetate and ATP as substrates. First activates an acetate ion to form acetyladenylate (Ac-AMP) and then transfers the acetyl group to tRNA to form ac(4)C34. This chain is tRNA(Met) cytidine acetate ligase, found in Clostridium novyi (strain NT).